The following is a 282-amino-acid chain: Succinate dehydrogenase [ubiquinone] iron-sulfur subunit, mitochondrial (282 aa).

A mitochondrion-targeting transit peptide spans 1 to 26; it reads MAAVVFSLRRSGPVLRLSGALQVSRG. The 2Fe-2S ferredoxin-type domain occupies 42–135; that stretch reads KKFAIYRWDP…VSKIYPLPHM (94 aa). Positions 95, 100, 103, and 115 each coordinate [2Fe-2S] cluster. The 4Fe-4S ferredoxin-type domain maps to 178 to 208; it reads DRDKLDGLYECILCACCSTSCPSYWWNADKY. 3 residues coordinate [4Fe-4S] cluster: Cys188, Cys191, and Cys194. Cys198 is a [3Fe-4S] cluster binding site. Trp203 serves as a coordination point for a ubiquinone. 2 residues coordinate [3Fe-4S] cluster: Cys245 and Cys251. Residue Cys255 participates in [4Fe-4S] cluster binding.

This sequence belongs to the succinate dehydrogenase/fumarate reductase iron-sulfur protein family. Component of complex II composed of four subunits: the flavoprotein (FP) sdha, iron-sulfur protein (IP) sdhb, and a cytochrome b composed of sdhc and sdhd. [2Fe-2S] cluster serves as cofactor. [3Fe-4S] cluster is required as a cofactor. It depends on [4Fe-4S] cluster as a cofactor.

It is found in the mitochondrion inner membrane. It carries out the reaction a quinone + succinate = fumarate + a quinol. The catalysed reaction is (R)-malate + a quinone = enol-oxaloacetate + a quinol. It catalyses the reaction (S)-malate + a quinone = enol-oxaloacetate + a quinol. The protein operates within carbohydrate metabolism; tricarboxylic acid cycle; fumarate from succinate (eukaryal route): step 1/1. Its activity is regulated as follows. Enol-oxaloacetate inhibits the succinate dehydrogenase activity. Functionally, iron-sulfur protein (IP) subunit of the succinate dehydrogenase complex (mitochondrial respiratory chain complex II), responsible for transferring electrons from succinate to ubiquinone (coenzyme Q). SDH also oxidizes malate to the non-canonical enol form of oxaloacetate, enol-oxaloacetate. Enol-oxaloacetate, which is a potent inhibitor of the succinate dehydrogenase activity, is further isomerized into keto-oxaloacetate. The chain is Succinate dehydrogenase [ubiquinone] iron-sulfur subunit, mitochondrial (sdhb) from Xenopus laevis (African clawed frog).